The primary structure comprises 519 residues: NAD-dependent histone deacetylase SIR2 (519 aa).

The disordered stretch occupies residues 154–212 (EIDENDNKNDGTNNSDIDSDIDSNSDMDSQSESGELDDAMDVDDSLSENEDEYDQDMST). The span at 187–208 (GELDDAMDVDDSLSENEDEYDQ) shows a compositional bias: acidic residues. A Deacetylase sirtuin-type domain is found at 221–486 (MTPFKYKLPD…SYLCKCLKWD (266 aa)). Residues 246-265 (GAGISTSLGIPDFRSFKGLY) and 328-331 (QNID) contribute to the NAD(+) site. Histidine 348 (proton acceptor) is an active-site residue. Positions 356, 359, 380, and 383 each coordinate Zn(2+). NAD(+)-binding positions include 430–432 (GTS), 455–457 (NKD), and cysteine 472.

It belongs to the sirtuin family. Class I subfamily. In terms of assembly, interacts with HXK1. Requires Zn(2+) as cofactor.

Its subcellular location is the nucleus. The enzyme catalyses N(6)-acetyl-L-lysyl-[protein] + NAD(+) + H2O = 2''-O-acetyl-ADP-D-ribose + nicotinamide + L-lysyl-[protein]. NAD-dependent deacetylase. Heterochromatin component that silences transcription at silent mating loci, telomeres and the ribosomal DNA, and that also suppresses recombination in the rDNA and extends replicative life span. It acts as a NAD-dependent histone deacetylase, which deacetylates 'Lys-9' and 'Lys-14' of Histone H3 and 'Lys-16' of Histone H4. Functions in the distribution of oxidatively damaged proteins during cell division. Mediates phenotypic switching. The sequence is that of NAD-dependent histone deacetylase SIR2 from Candida albicans (strain SC5314 / ATCC MYA-2876) (Yeast).